Reading from the N-terminus, the 296-residue chain is Polyadenylate-binding protein 2 (296 aa).

The segment at 1–102 (MAAVSSAASL…EEEPGELTGD (102 aa)) is disordered. Gly residues-rich tracts occupy residues 19–31 (LRGG…GGQD) and 71–82 (GRGGSGGGGAGG). Acidic residues predominate over residues 84-97 (EELEDEELEEEEPG). A coiled-coil region spans residues 107–141 (DPELEAIKARVREMEEEAEKLKELQNEVEKQMNMS). The tract at residues 146 to 296 (NAGPVIMSIE…ARVTSWYTPY (151 aa)) is necessary for homooligomerization. An RRM domain is found at 163–240 (RSIYVGNVDY…RQIKVVPKRT (78 aa)).

In terms of assembly, monomer and homooligomer. Binds RNA as a monomer and oligomerizes when bound to poly(A).

The protein localises to the nucleus. It is found in the cytoplasm. In terms of biological role, involved in the 3'-end formation of mRNA precursors (pre-mRNA) by the addition of a poly(A) tail of 200-250 nt to the upstream cleavage product. Stimulates poly(A) polymerase (PAPOLA) conferring processivity on the poly(A) tail elongation reaction and also controls the poly(A) tail length. Increases the affinity of poly(A) polymerase for RNA. Binds to poly(A) and to poly(G) with high affinity. May protect the poly(A) tail from degradation. In Xenopus tropicalis (Western clawed frog), this protein is Polyadenylate-binding protein 2.